Consider the following 1315-residue polypeptide: MTGEVGSEVNLEVNDLKLLSQEAADSPVDSGQGSFETLEPLSERDSDEEIFVSKKPKSRKVLQDSDSEAEDRDDAPEKPTYDDSAEDTQENLHSGKSQSRSFPKALADSDESDMEETPSQESPETQEAPSLEPGHQTGHSVDFTTGRKLSKTLLREGAEGKAKSKRRLEKEERTMEKIRRLKKKETRCEESDADRPLNDSGCLLEDSDLFETGLEEENDSALEDEESLESIRAAVKNKVKNRKKKEPTLESEAFSLEDGNELSKGSARKERKAARLSKEALKKLHSETQRLVRESALNLPYHMPESKTIHDFFKRKPRPTCQGSAMALLKSCKYQSGHYKETVNPADAAGMGAEDSSRGSEQRTGAGIAAETNVLSEVSEEAGITAGSDEACGKDPVRRGELEIEETEKHSDDRPYSPGDRSMSQQESSIPRIEDNEGHQAGDLTESDPPALEGEELKTVEKTDAKEGMPEQKTQSAAAAAVAVVTAAAAPPEKVRRFTVDRLRQLGVDVSSQPRLGADEDSFVILDEPKTNRELEALKQRFWRHANPAASPRACQTVNVNIIVKDLGTNGKEELKAEVVPVTLAAEKLEGASHAKPGEKLQMLKAKLQEAMKLRRLEERQKRQALFKLDNEDGFEEEEEEEEMTDESEEDGEEETTEYLLGSEDTETKDEKETDKENTDTSSDIGKSVALCVPKPLSSDSTLLLFKDSSSKMGYFPTEEKSETDEYLAKQSDKLDEDDSSSLLTKESSHNSSFELIGSTIPSYQPCNRQIGRGASFLPTAGFRSPSPGLFRGSLISSASKSSGKLSEPSLPVEDSQDLYTASPEPKTLFLGAGDFQFCLEDDTQSQLLDADGFLNIRNHRHRYQAVKPQLPLASMDENAMDANMDELLDLCTGQFTSQPEEKCQPRKNDKKENMEELLNLCSGKFPTQDASPVAPLGLRSQEKESSTEDPMEEALALCSGSFPTDREEEGEEEEFGDFQLVSKENGFASDEDEHSDSNDEELALDLEDDEEELLKQSEKMKRQMRLKKYLEDEAEVSGSDVGSEDEYDGEEIDEYEEDVIDEVLPSDEELESQIKKIHMKTMLDDDKRRLRLYQERYLADGDLHSDGPGRTRKFRWKHIDDTSQMDLFHRDSDDDQVEEQLDETEAKWRKERIEREQWLREQAQQGKIAADEEDIGDDSQFMMLAKKVTAKALQKNASHTVVVQESKSVLRNPFETIRPGGAHQLKTGSLLNQPKAVLQKLAALSDLNPSAPRNSRNFVFHTLSPTKAEAAKDSSKPQVRRRGLSSMMSPSPKRLKTNGSSPGPKRSIFRYLES.

2 disordered regions span residues 22–276 (EAAD…AARL) and 345–474 (PADA…EQKT). Serine 26, serine 42, serine 46, serine 53, serine 65, and serine 67 each carry phosphoserine. Residues 65–74 (SDSEAEDRDD) show a composition bias toward acidic residues. Polar residues predominate over residues 91-101 (NLHSGKSQSRS). Acidic residues predominate over residues 108 to 118 (DSDESDMEETP). 3 positions are modified to phosphoserine: serine 109, serine 112, and serine 119. Over residues 119-128 (SQESPETQEA) the composition is skewed to polar residues. Basic and acidic residues-rich tracts occupy residues 153 to 178 (LLREGAEGKAKSKRRLEKEERTMEKI) and 186 to 197 (TRCEESDADRPL). Residues 159–187 (EGKAKSKRRLEKEERTMEKIRRLKKKETR) adopt a coiled-coil conformation. The span at 205-228 (EDSDLFETGLEEENDSALEDEESL) shows a compositional bias: acidic residues. Serine 220 is subject to Phosphoserine. Residues 235-245 (VKNKVKNRKKK) are compositionally biased toward basic residues. Phosphoserine is present on serine 255. Composition is skewed to basic and acidic residues over residues 391–415 (ACGKDPVRRGELEIEETEKHSDDRP) and 455–470 (EELKTVEKTDAKEGMP). The residue at position 522 (serine 522) is a Phosphoserine. A coiled-coil region spans residues 599–626 (EKLQMLKAKLQEAMKLRRLEERQKRQAL). A disordered region spans residues 625–691 (ALFKLDNEDG…SSDIGKSVAL (67 aa)). Over residues 632–657 (EDGFEEEEEEEEMTDESEEDGEEETT) the composition is skewed to acidic residues. Residues 669 to 679 (KDEKETDKENT) show a composition bias toward basic and acidic residues. Residues serine 698, serine 701, serine 709, serine 722, and serine 740 each carry the phosphoserine modification. Positions 713–750 (MGYFPTEEKSETDEYLAKQSDKLDEDDSSSLLTKESSH) are disordered. Low complexity predominate over residues 741 to 750 (SSLLTKESSH). Phosphoserine occurs at positions 785, 787, 810, 816, and 823. An N6-acetyllysine modification is found at lysine 868. CKB motif repeat units follow at residues 887 to 896 (ELLDLCTGQF) and 917 to 926 (ELLNLCSGKF). Threonine 893 carries the phosphothreonine; by CHEK1 modification. Disordered stretches follow at residues 924-1002 (GKFP…NDEE) and 1032-1052 (EDEAEVSGSDVGSEDEYDGEE). Serine 932 is subject to Phosphoserine. The stretch at 954-963 (EALALCSGSF) is one CKB motif 3 repeat. An acidic patch region spans residues 966–1063 (DREEEGEEEE…DEYEEDVIDE (98 aa)). Acidic residues-rich tracts occupy residues 967-977 (REEEGEEEEFG), 990-1002 (SDEDEHSDSNDEE), and 1043-1052 (GSEDEYDGEE). A phosphoserine mark is found at serine 990, serine 996, and serine 998. Residues 1001 to 1036 (EELALDLEDDEEELLKQSEKMKRQMRLKKYLEDEAE) adopt a coiled-coil conformation. A phosphoserine mark is found at serine 1133 and serine 1265. A disordered region spans residues 1264–1315 (LSPTKAEAAKDSSKPQVRRRGLSSMMSPSPKRLKTNGSSPGPKRSIFRYLES).

This sequence belongs to the claspin family. Interacts (phosphorylation-dependent) with CHEK1; regulates CLSPN function in checkpoint for DNA damage and replication. Interacts with ATR and RAD9A and these interactions are slightly reduced during checkpoint activation. Interacts with BRCA1 and this interaction increases during checkpoint activation. Interacts with TIMELESS; the interaction is required for leading-strand replication. Associates with the MCM2-7 complex and other replisome factors. Interacts (via the acidic patch) with CDC7; the interaction is required for phosphorylation of MCM proteins and CLASPIN by CDC7. Interacts with PCNA. Interacts with FZR1. Post-translationally, phosphorylated. Undergoes ATR-dependent phosphorylation by CHEK1 during activation of DNA replication or damage checkpoints. Phosphorylation by CSNK1G1/CK1 promotes CHEK1 binding. Phosphorylated by CDC7 during DNA replication, phosphorylation inhibits interaction between the acidic patch and N-terminal segments leading to increased binding to DNA and PCNA. Ubiquitinated by the anaphase promoting complex/cyclosome (APC/C) during G1 phase, leading to its degradation by the proteasome. Ubiquitination is mediated via its interaction with FZR1/CDH1. Following DNA damage, it is deubiquitinated by USP28 in G2 phase, preventing its degradation. In terms of processing, proteolytically cleaved by caspase-7 (CASP7) in response to apoptosis, leading to its inactivation.

Its subcellular location is the nucleus. Its function is as follows. Required for checkpoint mediated cell cycle arrest in response to inhibition of DNA replication or to DNA damage induced by both ionizing and UV irradiation. Adapter protein which binds to BRCA1 and the checkpoint kinase CHEK1 and facilitates the ATR-dependent phosphorylation of both proteins. Also required to maintain normal rates of replication fork progression during unperturbed DNA replication. Binds directly to DNA, with particular affinity for branched or forked molecules and interacts with multiple protein components of the replisome such as the MCM2-7 complex and TIMELESS. Important for initiation of DNA replication, recruits kinase CDC7 to phosphorylate MCM2-7 components. The polypeptide is Claspin (Clspn) (Mus musculus (Mouse)).